We begin with the raw amino-acid sequence, 169 residues long: Biogenesis of lysosome-related organelles complex 1 subunit 4 (169 aa).

Belongs to the BLOC1S4 family. Component of the biogenesis of lysosome-related organelles complex-1 (BLOC-1) composed of Blos1, Blos2, Blos3, Blos4, Dysb, Muted, Pldn and Snapin. Interacts with Pldn.

Component of the biogenesis of lysosome-related organelles complex-1 (BLOC-1) involved in pigment granule biogenesis. This is Biogenesis of lysosome-related organelles complex 1 subunit 4 from Drosophila melanogaster (Fruit fly).